Consider the following 76-residue polypeptide: Small ribosomal subunit protein bS18 (76 aa).

The protein belongs to the bacterial ribosomal protein bS18 family. As to quaternary structure, part of the 30S ribosomal subunit. Forms a tight heterodimer with protein bS6.

Its function is as follows. Binds as a heterodimer with protein bS6 to the central domain of the 16S rRNA, where it helps stabilize the platform of the 30S subunit. In Marinomonas sp. (strain MWYL1), this protein is Small ribosomal subunit protein bS18.